Reading from the N-terminus, the 240-residue chain is DNA repair protein RecO (240 aa).

This sequence belongs to the RecO family.

Involved in DNA repair and RecF pathway recombination. This Actinobacillus pleuropneumoniae serotype 7 (strain AP76) protein is DNA repair protein RecO.